Consider the following 101-residue polypeptide: Chaperone modulatory protein CbpM (101 aa).

This sequence belongs to the CbpM family.

Its function is as follows. Interacts with CbpA and inhibits both the DnaJ-like co-chaperone activity and the DNA binding activity of CbpA. Together with CbpA, modulates the activity of the DnaK chaperone system. Does not inhibit the co-chaperone activity of DnaJ. The protein is Chaperone modulatory protein CbpM of Escherichia coli O1:K1 / APEC.